A 511-amino-acid chain; its full sequence is Maturase K (511 aa).

The protein belongs to the intron maturase 2 family. MatK subfamily.

The protein resides in the plastid. The protein localises to the chloroplast. Its function is as follows. Usually encoded in the trnK tRNA gene intron. Probably assists in splicing its own and other chloroplast group II introns. This chain is Maturase K, found in Anchomanes difformis (Amorphophallus difformis).